The following is a 470-amino-acid chain: GTPase Der (470 aa).

EngA-type G domains lie at 2 to 165 (KTIA…GLEA) and 201 to 372 (IRVG…ENFS). GTP is bound by residues 8–15 (GKPNVGKS), 55–59 (DTGGI), 117–120 (NKID), 207–214 (GKVNVGKS), 254–258 (DTAGI), and 318–321 (NKWD). The KH-like domain maps to 373-457 (RRIPTSILNK…PILIRARKRG (85 aa)).

This sequence belongs to the TRAFAC class TrmE-Era-EngA-EngB-Septin-like GTPase superfamily. EngA (Der) GTPase family. In terms of assembly, associates with the 50S ribosomal subunit.

In terms of biological role, GTPase that plays an essential role in the late steps of ribosome biogenesis. The chain is GTPase Der from Wolinella succinogenes (strain ATCC 29543 / DSM 1740 / CCUG 13145 / JCM 31913 / LMG 7466 / NCTC 11488 / FDC 602W) (Vibrio succinogenes).